Consider the following 408-residue polypeptide: Putative UPF0496 protein 2 (408 aa).

A run of 2 helical transmembrane segments spans residues 224-244 (RIARGTAAAALVGACAAAIVA) and 252-272 (ALVGIGVAAAAFGATPAGAAR). Residues 385–408 (MARGLPPPSPATVTTTSEERLTSS) form a disordered region.

This sequence belongs to the UPF0496 family.

The protein resides in the membrane. In Oryza sativa subsp. japonica (Rice), this protein is Putative UPF0496 protein 2.